The chain runs to 477 residues: Ribulose bisphosphate carboxylase large chain (477 aa).

Positions 1–2 are excised as a propeptide; that stretch reads MS. Pro3 carries the N-acetylproline modification. Lys14 carries the post-translational modification N6,N6,N6-trimethyllysine. Positions 123 and 173 each coordinate substrate. The active-site Proton acceptor is the Lys175. Lys177 lines the substrate pocket. The Mg(2+) site is built by Lys201, Asp203, and Glu204. Lys201 bears the N6-carboxylysine mark. The active-site Proton acceptor is the His294. 3 residues coordinate substrate: Arg295, His327, and Ser379.

This sequence belongs to the RuBisCO large chain family. Type I subfamily. As to quaternary structure, heterohexadecamer of 8 large chains and 8 small chains; disulfide-linked. The disulfide link is formed within the large subunit homodimers. Mg(2+) is required as a cofactor. Post-translationally, the disulfide bond which can form in the large chain dimeric partners within the hexadecamer appears to be associated with oxidative stress and protein turnover.

The protein localises to the plastid. The protein resides in the chloroplast. The catalysed reaction is 2 (2R)-3-phosphoglycerate + 2 H(+) = D-ribulose 1,5-bisphosphate + CO2 + H2O. The enzyme catalyses D-ribulose 1,5-bisphosphate + O2 = 2-phosphoglycolate + (2R)-3-phosphoglycerate + 2 H(+). Functionally, ruBisCO catalyzes two reactions: the carboxylation of D-ribulose 1,5-bisphosphate, the primary event in carbon dioxide fixation, as well as the oxidative fragmentation of the pentose substrate in the photorespiration process. Both reactions occur simultaneously and in competition at the same active site. The polypeptide is Ribulose bisphosphate carboxylase large chain (Atropa belladonna (Belladonna)).